The following is a 218-amino-acid chain: uncharacterized protein (218 aa).

This is an uncharacterized protein from Ureaplasma parvum serovar 3 (strain ATCC 700970).